The primary structure comprises 240 residues: 4-hydroxy-tetrahydrodipicolinate reductase (240 aa).

NAD(+) contacts are provided by residues 79–81 and 103–106; these read ATT and SANM. The active-site Proton donor/acceptor is the H135. A (S)-2,3,4,5-tetrahydrodipicolinate-binding site is contributed by H136. K139 acts as the Proton donor in catalysis. 145–146 contacts (S)-2,3,4,5-tetrahydrodipicolinate; it reads GT.

It belongs to the DapB family.

It is found in the cytoplasm. It catalyses the reaction (S)-2,3,4,5-tetrahydrodipicolinate + NAD(+) + H2O = (2S,4S)-4-hydroxy-2,3,4,5-tetrahydrodipicolinate + NADH + H(+). It carries out the reaction (S)-2,3,4,5-tetrahydrodipicolinate + NADP(+) + H2O = (2S,4S)-4-hydroxy-2,3,4,5-tetrahydrodipicolinate + NADPH + H(+). It functions in the pathway amino-acid biosynthesis; L-lysine biosynthesis via DAP pathway; (S)-tetrahydrodipicolinate from L-aspartate: step 4/4. Functionally, catalyzes the conversion of 4-hydroxy-tetrahydrodipicolinate (HTPA) to tetrahydrodipicolinate. This is 4-hydroxy-tetrahydrodipicolinate reductase from Staphylococcus aureus (strain bovine RF122 / ET3-1).